The following is a 540-amino-acid chain: Lysosomal cobalamin transport escort protein LMBD1 (540 aa).

The Extracellular portion of the chain corresponds to 1-10 (MATSGAASAE). The helical transmembrane segment at 11–31 (LVIGWCIFGLLLLAILAFCWI) threads the bilayer. The Cytoplasmic portion of the chain corresponds to 32–50 (YVRKYQSRRESEVVSTITA). Residues 51–71 (IFSLAIALITSALLPVDIFLV) form a helical membrane-spanning segment. At 72-100 (SYMKNQNGTFKDWANANVSRQIEDTVLYG) the chain is on the extracellular side. N78 and N88 each carry an N-linked (GlcNAc...) asparagine glycan. Residues 101-121 (YYTLYSVILFCVFFWIPFVYF) traverse the membrane as a helical segment. Residues 122–144 (YYEEKDDDDTSKCTQIKTALKYT) lie on the Cytoplasmic side of the membrane. Residues 145–165 (LGFVVICALLLLVGAFVPLNV) form a helical membrane-spanning segment. At 166-188 (PNNKNSTEWEKVKSLFEELGSSH) the chain is on the extracellular side. An N-linked (GlcNAc...) asparagine glycan is attached at N170. The helical transmembrane segment at 189–209 (GLAALSFSISSLTLIGMLAAI) threads the bilayer. Topologically, residues 210–305 (TYTAYGMSAL…KFCGALRPLK (96 aa)) are cytoplasmic. A YERL motif; mediates interaction with adapter protein complex 2 and is essential for its function in clathrin-mediated endocytosis of INSR motif is present at residues 232–235 (YERL). The residue at position 238 (T238) is a Phosphothreonine. Residues 294-297 (WTKF) carry the WTKF motif; mediates interaction with adapter protein complex 2 and is essential for its function in clathrin-mediated endocytosis of INSR motif. The helical transmembrane segment at 306–326 (IVWGIFFILVALLFVISLFLS) threads the bilayer. The Extracellular portion of the chain corresponds to 327–364 (NLDKALHSAGIDSGFIIFGANLSNPLNMLLPLLQTVFP). A glycan (N-linked (GlcNAc...) asparagine) is linked at N347. The helical transmembrane segment at 365 to 385 (LDYILITIIIMYFIFTSMAGI) threads the bilayer. Over 386 to 408 (RNIGIWFFWIRLYKIRRGRTRPQ) the chain is Cytoplasmic. Residues 409–429 (ALLFLCMILLLIVLHTSYMIY) form a helical membrane-spanning segment. The Extracellular segment spans residues 430–486 (SLAPQYVMYGSQNYLIETNITSDNHKGNSTLSVPKRCDADAPEDQCTVTRTYLFLHK). Residues N448 and N457 are each glycosylated (N-linked (GlcNAc...) asparagine). The helical transmembrane segment at 487 to 507 (FWFFSAAYYFGNWAFLGVFLI) threads the bilayer. The Cytoplasmic portion of the chain corresponds to 508–540 (GLIVSCCKGKKSVIEGVDEDSDISDDEPSVYSA). S528 and S531 each carry phosphoserine.

Belongs to the LIMR family. LMBRD1 subfamily. In terms of assembly, (Microbial infection) Interacts with hepatitis delta virus NES (HDAg-L). As to quaternary structure, interacts with ABCD4; this interaction induces the translocation of ABCD4 from the endoplasmic reticulum to the lysosome. Interacts with ABCD4 and MMACHC; this interaction ensures the transport of cobalamin from the lysosome to the cytoplasm. Interacts with INSR, adapter protein complex 2 and clathrin heavy chain. In terms of processing, N-glycosylated. In terms of tissue distribution, isoform 3 is expressed in liver.

Its subcellular location is the endoplasmic reticulum membrane. The protein resides in the lysosome membrane. The protein localises to the cell membrane. It is found in the cytoplasmic vesicle. It localises to the clathrin-coated vesicle. Its function is as follows. Lysosomal membrane chaperone required to export cobalamin (vitamin B12) from the lysosome to the cytosol, allowing its conversion to cofactors. Targets ABCD4 transporter from the endoplasmic reticulum to the lysosome. Then forms a complex with lysosomal ABCD4 and cytoplasmic MMACHC to transport cobalamin across the lysosomal membrane. Acts as an adapter protein which plays an important role in mediating and regulating the internalization of the insulin receptor (INSR). Involved in clathrin-mediated endocytosis of INSR via its interaction with adapter protein complex 2. Essential for the initiation of gastrulation and early formation of mesoderm structures during embryogenesis. Functionally, (Microbial infection) May play a role in the assembly of hepatitis delta virus (HDV). The protein is Lysosomal cobalamin transport escort protein LMBD1 of Homo sapiens (Human).